The chain runs to 835 residues: Prickle-like protein 1-A (835 aa).

The PET domain maps to 14-122; sequence FGCQRSSTSD…NIKMLSRAVM (109 aa). 3 LIM zinc-binding domains span residues 124-188, 189-249, and 250-313; these read ATCE…ELLK, PRCS…HYAE, and YCES…EDVH. Disordered stretches follow at residues 312–346, 426–455, 603–706, and 769–835; these read VHASDSSDSAFQSARSRESRRSVRMGKSSRSADQC, LFQQPPEDNRSNDHWMSENIKGKNDLQRNN, CQEK…RKRS, and CSSS…CIIS. Basic and acidic residues-rich tracts occupy residues 432–453, 603–614, and 646–655; these read EDNRSNDHWMSENIKGKNDLQR, CQEKPPPEEKPM, and EIRRPPMSER. 2 stretches are compositionally biased toward basic residues: residues 669 to 683 and 819 to 835; these read RPHHHHHHRRRKSRK and SKSKKKKGHKGKNCIIS. Cys-832 is subject to Cysteine methyl ester. Cys-832 is lipidated: S-farnesyl cysteine. Positions 833-835 are cleaved as a propeptide — removed in mature form; it reads IIS.

It belongs to the prickle / espinas / testin family. As to quaternary structure, interacts with dvl2/dsh and mapk8/jnk1. As to expression, expressed in the dorsal marginal zone of early gastrulae (stage 10). As gastrulation proceeds, expression expands to include the lateral and ventral marginal zones, excluding the few rows of cells above the blastopore lip. Expression moves dorsally with gastrulation cell movements, and by the end of gastrulation expression is seen in dorsal mesoderm and posterior but not anterior neural ectoderm. Expression becomes down-regulated in mesoderm but remains strong in posterior ectoderm through the neurula stages. During tailbud stages, expressed in the pronephric duct, tailbud, tailtip and forming somites. In the most posterior regions, expressed in notochord and in the floorplate of the neural tube with weak expression in the roofplate. At stage 30, expressed in a complex pattern in the head including strong expression in the lens and otic vesicle.

Its subcellular location is the cell membrane. Its function is as follows. Acts in a planar cell polarity (PCP) complex; polarization along the apical/basal axis of epithelial cells. Regulates the polarized assembly of fibronectrin on the surface of the mesoderm during gastrulation. Essential for gastrulation cell movements, cooperating with dvl2/dsh to activate jnk. Acts together with tes to control axial elongation. The sequence is that of Prickle-like protein 1-A (prickle1-a) from Xenopus laevis (African clawed frog).